Reading from the N-terminus, the 348-residue chain is MSLVGCHILSIDHFSRQDLEELLMTAKLLEPVAQRKVRCNVLDGSVMANLFFEASTRTRMSFHTAFARLGGSVVDTTGFTFSSISKGESLSDTARVIAGYADVIVMRHPDQGSVAEFASKINVPVINAGDGIGEHPSQALLDYYTINNEFERLKKNIDGMTIAMVGDLKNGRTIHSLAKLLSLFDNIHFRFIAPETLRAPAELLELLRSRGHDVQEFDDIANGLPGTDIIYATRIQRERIKDGELMEGYSEKFRINAAAVARYATPETIIMHPLPRDSRAGAFDLSTDLDNHPQLAIFRQADNGVTVRMAIFAMVLNVHRGIESFFSPHRGFRPDRYGQGDADFYQLK.

Positions 57 and 58 each coordinate carbamoyl phosphate. K86 lines the L-aspartate pocket. Carbamoyl phosphate is bound by residues R107, H135, and Q138. R172 and R234 together coordinate L-aspartate. 2 residues coordinate carbamoyl phosphate: L274 and P275.

The protein belongs to the aspartate/ornithine carbamoyltransferase superfamily. ATCase family. Heterododecamer (2C3:3R2) of six catalytic PyrB chains organized as two trimers (C3), and six regulatory PyrI chains organized as three dimers (R2).

It carries out the reaction carbamoyl phosphate + L-aspartate = N-carbamoyl-L-aspartate + phosphate + H(+). It functions in the pathway pyrimidine metabolism; UMP biosynthesis via de novo pathway; (S)-dihydroorotate from bicarbonate: step 2/3. In terms of biological role, catalyzes the condensation of carbamoyl phosphate and aspartate to form carbamoyl aspartate and inorganic phosphate, the committed step in the de novo pyrimidine nucleotide biosynthesis pathway. The sequence is that of Aspartate carbamoyltransferase catalytic subunit from Dichelobacter nodosus (strain VCS1703A).